Here is a 33-residue protein sequence, read N- to C-terminus: uncharacterized protein (33 aa).

The tract at residues 1–33 is disordered; it reads MQPGTGLSFDISQILKQGSDPKQKLPERQAIVL.

This is an uncharacterized protein from Caenorhabditis elegans.